A 274-amino-acid polypeptide reads, in one-letter code: NH(3)-dependent NAD(+) synthetase (274 aa).

46 to 53 (GISGGQDS) lines the ATP pocket. D52 contacts Mg(2+). R140 is a binding site for deamido-NAD(+). T160 is a binding site for ATP. E165 lines the Mg(2+) pocket. Deamido-NAD(+) contacts are provided by K173 and D180. ATP-binding residues include K189 and T211. 260-261 (HK) contacts deamido-NAD(+).

It belongs to the NAD synthetase family. As to quaternary structure, homodimer.

It catalyses the reaction deamido-NAD(+) + NH4(+) + ATP = AMP + diphosphate + NAD(+) + H(+). The protein operates within cofactor biosynthesis; NAD(+) biosynthesis; NAD(+) from deamido-NAD(+) (ammonia route): step 1/1. Catalyzes the ATP-dependent amidation of deamido-NAD to form NAD. Uses ammonia as a nitrogen source. The sequence is that of NH(3)-dependent NAD(+) synthetase from Streptococcus equi subsp. zooepidemicus (strain H70).